The sequence spans 352 residues: Farnesyl pyrophosphate synthase (352 aa).

3 residues coordinate isopentenyl diphosphate: Lys52, Arg55, and Gln93. Positions 100 and 104 each coordinate Mg(2+). Arg109 is a binding site for dimethylallyl diphosphate. Arg110 contacts isopentenyl diphosphate. 5 residues coordinate dimethylallyl diphosphate: Lys197, Thr198, Gln237, Lys254, and Lys263.

Belongs to the FPP/GGPP synthase family. Requires Mg(2+) as cofactor.

The enzyme catalyses isopentenyl diphosphate + dimethylallyl diphosphate = (2E)-geranyl diphosphate + diphosphate. It catalyses the reaction isopentenyl diphosphate + (2E)-geranyl diphosphate = (2E,6E)-farnesyl diphosphate + diphosphate. Its pathway is isoprenoid biosynthesis; farnesyl diphosphate biosynthesis; farnesyl diphosphate from geranyl diphosphate and isopentenyl diphosphate: step 1/1. The protein operates within isoprenoid biosynthesis; geranyl diphosphate biosynthesis; geranyl diphosphate from dimethylallyl diphosphate and isopentenyl diphosphate: step 1/1. In terms of biological role, farnesyl pyrophosphate synthase; part of the second module of ergosterol biosynthesis pathway that includes the middle steps of the pathway. ERG20 catalyzes the sequential condensation of isopentenyl pyrophosphate with dimethylallyl pyrophosphate, and then with the resultant geranylpyrophosphate to the ultimate product farnesyl pyrophosphate. The second module is carried out in the vacuole and involves the formation of farnesyl diphosphate, which is also an important intermediate in the biosynthesis of ubiquinone, dolichol, heme and prenylated proteins. Activity by the mevalonate kinase ERG12 first converts mevalonate into 5-phosphomevalonate. 5-phosphomevalonate is then further converted to 5-diphosphomevalonate by the phosphomevalonate kinase ERG8. The diphosphomevalonate decarboxylase MVD1/ERG19 then produces isopentenyl diphosphate. The isopentenyl-diphosphate delta-isomerase IDI1 then catalyzes the 1,3-allylic rearrangement of the homoallylic substrate isopentenyl (IPP) to its highly electrophilic allylic isomer, dimethylallyl diphosphate (DMAPP). Finally the farnesyl diphosphate synthase ERG20 catalyzes the sequential condensation of isopentenyl pyrophosphate with dimethylallyl pyrophosphate, and then with the resultant geranylpyrophosphate to the ultimate product farnesyl pyrophosphate. In Saccharomyces cerevisiae (strain ATCC 204508 / S288c) (Baker's yeast), this protein is Farnesyl pyrophosphate synthase (ERG20).